We begin with the raw amino-acid sequence, 466 residues long: Sulfate adenylyltransferase subunit 1 (466 aa).

Residues 22 to 237 (KELVRFLTCG…LNTIDVKTQE (216 aa)) enclose the tr-type G domain. Positions 31–38 (GSVDDGKS) are G1. 31–38 (GSVDDGKS) contacts GTP. The segment at 89-93 (GITID) is G2. Residues 110 to 113 (DTPG) are G3. GTP contacts are provided by residues 110 to 114 (DTPGH) and 165 to 168 (NKMD). A G4 region spans residues 165 to 168 (NKMD). The tract at residues 202-204 (SAL) is G5.

It belongs to the TRAFAC class translation factor GTPase superfamily. Classic translation factor GTPase family. CysN/NodQ subfamily. Heterodimer composed of CysD, the smaller subunit, and CysN.

It carries out the reaction sulfate + ATP + H(+) = adenosine 5'-phosphosulfate + diphosphate. The protein operates within sulfur metabolism; hydrogen sulfide biosynthesis; sulfite from sulfate: step 1/3. With CysD forms the ATP sulfurylase (ATPS) that catalyzes the adenylation of sulfate producing adenosine 5'-phosphosulfate (APS) and diphosphate, the first enzymatic step in sulfur assimilation pathway. APS synthesis involves the formation of a high-energy phosphoric-sulfuric acid anhydride bond driven by GTP hydrolysis by CysN coupled to ATP hydrolysis by CysD. The sequence is that of Sulfate adenylyltransferase subunit 1 from Colwellia psychrerythraea (strain 34H / ATCC BAA-681) (Vibrio psychroerythus).